The primary structure comprises 232 residues: MKSLNDAISKIIDYKFTNYAILEEALTHPSVNKRNSKNQIVSYERLEFLGDSVLNMVVSATLFKLFPEEKEGALAKRKTDLVCGNTIANVAKEIKLGSFIIMNNSERCNGGRCNLKNLENSLEALIGAIYIDGGLENVEKFIIQYWEKLAKGMLDPPQDPKTSLQEWTQKNKLPLPEYELVKQTGPAHNPEFTISVCIEDYGKVSACASSKKIAEQKAAELMLEKIGKDASV.

In terms of domain architecture, RNase III spans 5-134 (NDAISKIIDY…LIGAIYIDGG (130 aa)). Glu-47 contacts Mg(2+). Residue Asp-51 is part of the active site. Residues Asn-120 and Glu-123 each coordinate Mg(2+). Glu-123 is a catalytic residue. A DRBM domain is found at 159-228 (DPKTSLQEWT…AELMLEKIGK (70 aa)).

It belongs to the ribonuclease III family. Homodimer. Requires Mg(2+) as cofactor.

It is found in the cytoplasm. The catalysed reaction is Endonucleolytic cleavage to 5'-phosphomonoester.. Digests double-stranded RNA. Involved in the processing of primary rRNA transcript to yield the immediate precursors to the large and small rRNAs (23S and 16S). Processes some mRNAs, and tRNAs when they are encoded in the rRNA operon. Processes pre-crRNA and tracrRNA of type II CRISPR loci if present in the organism. The protein is Ribonuclease 3 of Wolbachia pipientis wMel.